A 364-amino-acid polypeptide reads, in one-letter code: MKTQYRIAVLPGDGIGPEVMREAYKILKILKNNFLLSFEIEEFNVGGIAIDQEGLALPKKTLLGCEKSDAILFGSVGGKKWDNFPIEERPERAALLPLRKHFNLFANLRPAKIYSELKHLSPLRSNIVRDGFDILCIRELTGGIYFGQPSGRRLEKNNIEYAFDTEIYYDYEINRIAHLAFQLAQSRSHKVCSIDKSNVLNSSILWKEIVQKVSKNYPDVDLSHLYIDNAIMQIIKNPNQFDVLLCPNLFGDIISDECAIITGSIGMLPSASLNEKKFGLYEPAGGSAPDIAGKNIANPIAQILSLSMLVRYGMNLKDIADKIDKSVLSVLKKGYRTADISNNNNYLKTNEMGDVIANALISGE.

78-91 (GKKWDNFPIEERPE) contributes to the NAD(+) binding site. 4 residues coordinate substrate: Arg99, Arg109, Arg138, and Asp228. Mg(2+)-binding residues include Asp228, Asp252, and Asp256. 286 to 298 (GSAPDIAGKNIAN) serves as a coordination point for NAD(+).

It belongs to the isocitrate and isopropylmalate dehydrogenases family. LeuB type 1 subfamily. In terms of assembly, homodimer. Mg(2+) serves as cofactor. It depends on Mn(2+) as a cofactor.

The protein localises to the cytoplasm. The catalysed reaction is (2R,3S)-3-isopropylmalate + NAD(+) = 4-methyl-2-oxopentanoate + CO2 + NADH. It participates in amino-acid biosynthesis; L-leucine biosynthesis; L-leucine from 3-methyl-2-oxobutanoate: step 3/4. Its function is as follows. Catalyzes the oxidation of 3-carboxy-2-hydroxy-4-methylpentanoate (3-isopropylmalate) to 3-carboxy-4-methyl-2-oxopentanoate. The product decarboxylates to 4-methyl-2 oxopentanoate. The protein is 3-isopropylmalate dehydrogenase of Buchnera aphidicola subsp. Uroleucon obscurum.